A 201-amino-acid chain; its full sequence is Peptidyl-tRNA hydrolase (201 aa).

TRNA is bound at residue tyrosine 14. Histidine 19 serves as the catalytic Proton acceptor. TRNA is bound by residues tyrosine 64, asparagine 66, and asparagine 112.

It belongs to the PTH family. As to quaternary structure, monomer.

Its subcellular location is the cytoplasm. It catalyses the reaction an N-acyl-L-alpha-aminoacyl-tRNA + H2O = an N-acyl-L-amino acid + a tRNA + H(+). Functionally, hydrolyzes ribosome-free peptidyl-tRNAs (with 1 or more amino acids incorporated), which drop off the ribosome during protein synthesis, or as a result of ribosome stalling. Its function is as follows. Catalyzes the release of premature peptidyl moieties from peptidyl-tRNA molecules trapped in stalled 50S ribosomal subunits, and thus maintains levels of free tRNAs and 50S ribosomes. In Bradyrhizobium diazoefficiens (strain JCM 10833 / BCRC 13528 / IAM 13628 / NBRC 14792 / USDA 110), this protein is Peptidyl-tRNA hydrolase.